An 83-amino-acid polypeptide reads, in one-letter code: Exodeoxyribonuclease 7 small subunit (83 aa).

This sequence belongs to the XseB family. Heterooligomer composed of large and small subunits.

The protein resides in the cytoplasm. It carries out the reaction Exonucleolytic cleavage in either 5'- to 3'- or 3'- to 5'-direction to yield nucleoside 5'-phosphates.. In terms of biological role, bidirectionally degrades single-stranded DNA into large acid-insoluble oligonucleotides, which are then degraded further into small acid-soluble oligonucleotides. This chain is Exodeoxyribonuclease 7 small subunit, found in Heliobacterium modesticaldum (strain ATCC 51547 / Ice1).